A 188-amino-acid chain; its full sequence is dCTP deaminase (188 aa).

109–114 (KSTYAR) lines the dCTP pocket. Catalysis depends on Glu135, which acts as the Proton donor/acceptor. DCTP contacts are provided by Gln154, Tyr168, and Gln178.

It belongs to the dCTP deaminase family. Homotrimer.

It catalyses the reaction dCTP + H2O + H(+) = dUTP + NH4(+). The protein operates within pyrimidine metabolism; dUMP biosynthesis; dUMP from dCTP (dUTP route): step 1/2. In terms of biological role, catalyzes the deamination of dCTP to dUTP. The sequence is that of dCTP deaminase from Helicobacter pylori (strain P12).